Consider the following 292-residue polypeptide: AKT-interacting protein (292 aa).

A disordered region spans residues 1–64 (MNPFWNMSSA…ISPSPSVQPT (64 aa)). Residues 14–23 (KRSDNDEKIA) show a composition bias toward basic and acidic residues. The UBC core domain maps to 75 to 223 (YLEYSLLAEF…VVDSVKLCNS (149 aa)). A disordered region spans residues 273 to 292 (SWVKPGSVLPFSKEENSLQT).

Belongs to the ubiquitin-conjugating enzyme family. FTS subfamily.

It is found in the cytoplasm. Its subcellular location is the cell membrane. May function to promote vesicle trafficking and/or fusion. May also regulate apoptosis. The protein is AKT-interacting protein (aktip) of Xenopus tropicalis (Western clawed frog).